We begin with the raw amino-acid sequence, 90 residues long: Probable Fe(2+)-trafficking protein (90 aa).

Belongs to the Fe(2+)-trafficking protein family.

Functionally, could be a mediator in iron transactions between iron acquisition and iron-requiring processes, such as synthesis and/or repair of Fe-S clusters in biosynthetic enzymes. This Cupriavidus taiwanensis (strain DSM 17343 / BCRC 17206 / CCUG 44338 / CIP 107171 / LMG 19424 / R1) (Ralstonia taiwanensis (strain LMG 19424)) protein is Probable Fe(2+)-trafficking protein.